Reading from the N-terminus, the 1160-residue chain is MAHTNLPEKFQVVIENGENILQRVYNTYKLFQNNKVKPSFFNDEKISKILKNLIAKYPELPENNDKSITGFDLLTSRAKQHLEELEDHYYTITDAYDWKEASFILMQEISSNTVSINFNNNIQLCSKFLDVLVLYGKINYLVSLIPDKKIITAVYAKLFLYTRSASEPTFSKMGRWINDIEQPFKKIQEEFRVLNDAVGHALSSFELTYAKRRVITQLRKDGALNLILKPEDIARPVQDSYRIELAYAGRIQQWILFGYLFAPGTLSTPQSIELLRFTLSECFYLSVFKDISISIHNEFNTLFKNYKSKTINLQKQKKIIKDAAQASTQEAPRKHAERRVYIRQELEAMWNLFRDKPCLLAPKINVLLAALSMAKEEIFWYFRHTDVIPPEKVKKFYNKQNEVREKRISSLLSLVDHLVQLVHTHKKMIQNYYLEYISGADILGLQKVITPQLLQNAGSIVTQAVNTIVNELKSLNANGQDYSFEGFRANWMRLGYLLQSNSCPLKESESKQITSRLNLIYTHSKNVDCLDQLLDEYGNMTQLWSYKEPLFHSFDAAIVDMTCDQPSHSMIYLKLLSQFPNHVANQFYPEEKELIGKECVELANSCLTKITNRIVSIMANTIASTFLSDEQQLADVNAAFPLLQKKKDWKPPKDFVPPIEPASESQFRNRANLEQLRSEEKNAFQLCTALNEFLDITIYDHIFVPREFLREKLGSALKQYMRQSIQPPAPTSSSSQIDINITRLSTYESQLRVFIGVLILVENHVDIDIGDLIRETILTEFYAKALGKSGRVDWFPEGEIEMNELTLHSITSYYVDLVSKKLNTPGVVFSPVKLGFISKAGTPFRAEEHADLTEMRALCDLVGPYGIKVIEREILRFILTTTTSMKEILSLNAANLEEFASNYYKPKAMELLKKFKTTDLDLIVTKSIAIGNALHLRSMIRESMKDVITDNFPYINNAVANAFDQYNRNTFMFPDFLGVDTLALDSGLNVGIADQYLKVILRKVSSEADKRIWELLPVMFSLTFYGNIWKETQYKATIDAHSNNVHVLSKTIIDLLIAFGAINSTTGNEAELFQSFKRFLEISSVNILRMFKGKQGEKFVPNEIQSVIIFLDKFTQQCPLLSKDSLEQYIPYSLIRNMYKDLYEHKNLQKQQSETSEQNF.

It belongs to the HEM-1/HEM-2 family. In terms of assembly, part of a Scar/WAVE complex containing brk1, scrA, abiA, pirA and napA.

In terms of biological role, involved in regulation of actin and microtubule organization. Involved in cell adhesion. In Dictyostelium discoideum (Social amoeba), this protein is Nck-associated protein 1 homolog (napA).